We begin with the raw amino-acid sequence, 395 residues long: Putative 8-amino-7-oxononanoate synthase (395 aa).

Arginine 23 serves as a coordination point for substrate. 110 to 111 (GY) is a binding site for pyridoxal 5'-phosphate. Histidine 135 provides a ligand contact to substrate. Pyridoxal 5'-phosphate-binding positions include serine 182, 207–210 (DEAH), and 239–242 (TFSK). N6-(pyridoxal phosphate)lysine is present on lysine 242. Threonine 356 is a substrate binding site.

This sequence belongs to the class-II pyridoxal-phosphate-dependent aminotransferase family. BioF subfamily. In terms of assembly, homodimer. Pyridoxal 5'-phosphate serves as cofactor.

The enzyme catalyses 6-carboxyhexanoyl-[ACP] + L-alanine + H(+) = (8S)-8-amino-7-oxononanoate + holo-[ACP] + CO2. It functions in the pathway cofactor biosynthesis; biotin biosynthesis. Its function is as follows. Catalyzes the decarboxylative condensation of pimeloyl-[acyl-carrier protein] and L-alanine to produce 8-amino-7-oxononanoate (AON), [acyl-carrier protein], and carbon dioxide. In Bacillus cereus (strain G9842), this protein is Putative 8-amino-7-oxononanoate synthase (bioF).